A 313-amino-acid polypeptide reads, in one-letter code: Ribosomal RNA small subunit methyltransferase H (313 aa).

S-adenosyl-L-methionine is bound by residues 35–37 (GGH), aspartate 55, phenylalanine 79, aspartate 101, and glutamine 108.

It belongs to the methyltransferase superfamily. RsmH family.

The protein localises to the cytoplasm. The enzyme catalyses cytidine(1402) in 16S rRNA + S-adenosyl-L-methionine = N(4)-methylcytidine(1402) in 16S rRNA + S-adenosyl-L-homocysteine + H(+). Specifically methylates the N4 position of cytidine in position 1402 (C1402) of 16S rRNA. The protein is Ribosomal RNA small subunit methyltransferase H of Escherichia coli O6:H1 (strain CFT073 / ATCC 700928 / UPEC).